The primary structure comprises 117 residues: Resistin-like gamma (117 aa).

The N-terminal stretch at 1–29 is a signal peptide; sequence MLTFNKMKTTTCSLLICISLLQLMVPVNT. 5 cysteine pairs are disulfide-bonded: C61–C114, C73–C113, C82–C99, C84–C101, and C88–C103.

The protein belongs to the resistin/FIZZ family. Homodimer. Heterodimer with RETNLB. As to expression, expressed in colon, lung, spleen, pancreas, ileum and bone marrow (at protein level). In colon, found throughout the crypt and surface epithelium, including goblet cells (at protein level). Highest expression is observed in bone marrow, spleen and lung, with lower levels in other tissues. Detected at low levels in granulocytes, but not found in monocytes or lymphocytes. Has very weak expression in white adipose tissue.

Its subcellular location is the secreted. Functionally, probable hormone. Promotes chemotaxis in myeloid cells. The protein is Resistin-like gamma of Mus musculus (Mouse).